Reading from the N-terminus, the 122-residue chain is Probable dihydroneopterin aldolase (122 aa).

Substrate-binding positions include Glu-21, Tyr-54, and 73-74 (LE). The Proton donor/acceptor role is filled by Lys-101.

This sequence belongs to the DHNA family.

The catalysed reaction is 7,8-dihydroneopterin = 6-hydroxymethyl-7,8-dihydropterin + glycolaldehyde. The protein operates within cofactor biosynthesis; tetrahydrofolate biosynthesis; 2-amino-4-hydroxy-6-hydroxymethyl-7,8-dihydropteridine diphosphate from 7,8-dihydroneopterin triphosphate: step 3/4. Its function is as follows. Catalyzes the conversion of 7,8-dihydroneopterin to 6-hydroxymethyl-7,8-dihydropterin. In Chlamydia muridarum (strain MoPn / Nigg), this protein is Probable dihydroneopterin aldolase (folB).